We begin with the raw amino-acid sequence, 1578 residues long: Formin-2 (1578 aa).

Basic and acidic residues-rich tracts occupy residues 1–17 (MGNQ…DASH), 26–35 (AGPRDAEITK), and 57–66 (TSKKKSKSDS). The segment at 1–73 (MGNQDGKLKR…SDSRASVFSN (73 aa)) is disordered. A Phosphoserine modification is found at S89. 3 disordered regions span residues 208–230 (KLLL…QPGA), 244–383 (EAEK…PSPR), and 401–458 (RQLS…GLSR). Composition is skewed to polar residues over residues 273–282 (SSGSHLTSET) and 290–300 (SAVTDSLSSPA). A compositionally biased stretch (acidic residues) spans 322-333 (DTDEECEEDAFE). Residues 351–364 (ASQRLEKEPEEGMR) show a composition bias toward basic and acidic residues. Composition is skewed to low complexity over residues 404–418 (SSPN…NQSP) and 427–442 (SVSR…AAAP). Phosphoserine occurs at positions 459, 489, and 493. A disordered region spans residues 587–634 (SMDYSEGQFPRREPSMWPSSKLPEEEPSPKDVDTEPKSSILESPKKCS). The segment covering 608 to 622 (LPEEEPSPKDVDTEP) has biased composition (basic and acidic residues). Residues 643–683 (DVKSEGQATVIQQLEQTIEDLRTKIAELEKQYPALDLEGPR) are a coiled coil. Disordered regions lie at residues 714–765 (RTLE…SGPQ), 786–836 (DAQQ…GNNC), and 880–944 (PALQ…MGIS). An FH1 domain is found at 735-1124 (PPPKAPPEGL…GCGFLFPPLP (390 aa)). The segment covering 786 to 795 (DAQQIQSASQ) has biased composition (polar residues). Residues 803 to 817 (LGSDSQGQPSQPSLH) are compositionally biased toward low complexity. Residues 818-827 (TESETSHEHS) show a composition bias toward basic and acidic residues. Residues 893–944 (LPAPPQPPPLPGLGVPPPPPAPPLPGMGIPPPPPLPGMGIPPPPPLPGMGIS) are compositionally biased toward pro residues. Repeat copies occupy residues 919–929 (MGIPPPPPLPG), 930–940 (MGIPPPPPLPG), 941–951 (MGISPLPPLPG), 952–962 (MGIPPPPPLPG), 963–973 (VGIPPPPPLPG), 974–984 (VGIPPPPPLPG), 985–995 (VGIPPPPPLPG), 996–1006 (VGIPPPPPLPG), 1007–1017 (VGIPPPPPLPG), 1018–1028 (VGIPPPPPLPG), 1029–1039 (VGIPPPPPLPG), and 1040–1050 (VGIPPPPPLPG). The 12 X 11 AA tandem repeats of [MV]-G-I-P-P-P-P-P-L-P-G stretch occupies residues 919 to 1039 (MGIPPPPPLP…GIPPPPPLPG (121 aa)). Residues 1037–1097 (LPGVGIPPPP…PPPPLLPGSG (61 aa)) are compositionally biased toward pro residues. Positions 1037-1108 (LPGVGIPPPP…PHSSQVGSST (72 aa)) are disordered. In terms of domain architecture, FH2 spans 1139 to 1554 (RKQLIEPCRP…KEAEEVCRQK (416 aa)). A coiled-coil region spans residues 1419–1455 (QELFQASQMKFEDFQKDLRKLKKDLKACEAEAGKVYQ). Positions 1571-1578 (KAKISMKT) are important for interaction with SPIRE1.

The protein belongs to the formin homology family. Cappuccino subfamily. As to quaternary structure, interacts with SPIRE1. Binds actin. Interacts with CDKN1A. In terms of tissue distribution, detected in brain and in oocytes (at protein level). Expressed almost exclusively in the developing and mature central nervous system. Detected in oocytes.

It localises to the cytoplasm. It is found in the cytoskeleton. The protein localises to the cytosol. Its subcellular location is the perinuclear region. The protein resides in the nucleus. It localises to the nucleolus. It is found in the cell membrane. The protein localises to the cell cortex. Its subcellular location is the cytoplasmic vesicle membrane. Functionally, actin-binding protein that is involved in actin cytoskeleton assembly and reorganization. Acts as an actin nucleation factor and promotes assembly of actin filaments together with SPIRE1 and SPIRE2. Involved in intracellular vesicle transport along actin fibers, providing a novel link between actin cytoskeleton dynamics and intracellular transport. Required for asymmetric spindle positioning, asymmetric oocyte division and polar body extrusion during female germ cell meiosis. Plays a role in responses to DNA damage, cellular stress and hypoxia by protecting CDKN1A against degradation, and thereby plays a role in stress-induced cell cycle arrest. Also acts in the nucleus: together with SPIRE1 and SPIRE2, promotes assembly of nuclear actin filaments in response to DNA damage in order to facilitate movement of chromatin and repair factors after DNA damage. Protects cells against apoptosis by protecting CDKN1A against degradation. This chain is Formin-2 (Fmn2), found in Mus musculus (Mouse).